The primary structure comprises 526 residues: Bifunctional purine biosynthesis protein PurH (526 aa).

Residues 1-147 (MTKIERALIS…KNWAHVAIVT (147 aa)) form the MGS-like domain.

Belongs to the PurH family.

It catalyses the reaction (6R)-10-formyltetrahydrofolate + 5-amino-1-(5-phospho-beta-D-ribosyl)imidazole-4-carboxamide = 5-formamido-1-(5-phospho-D-ribosyl)imidazole-4-carboxamide + (6S)-5,6,7,8-tetrahydrofolate. The catalysed reaction is IMP + H2O = 5-formamido-1-(5-phospho-D-ribosyl)imidazole-4-carboxamide. It functions in the pathway purine metabolism; IMP biosynthesis via de novo pathway; 5-formamido-1-(5-phospho-D-ribosyl)imidazole-4-carboxamide from 5-amino-1-(5-phospho-D-ribosyl)imidazole-4-carboxamide (10-formyl THF route): step 1/1. The protein operates within purine metabolism; IMP biosynthesis via de novo pathway; IMP from 5-formamido-1-(5-phospho-D-ribosyl)imidazole-4-carboxamide: step 1/1. This is Bifunctional purine biosynthesis protein PurH from Laribacter hongkongensis (strain HLHK9).